The following is a 387-amino-acid chain: 1-deoxy-D-xylulose 5-phosphate reductoisomerase (387 aa).

NADPH is bound by residues Thr10, Gly11, Ile13, Asn38, and Asn122. Lys123 contacts 1-deoxy-D-xylulose 5-phosphate. Glu124 provides a ligand contact to NADPH. Asp148 provides a ligand contact to Mn(2+). Positions 149, 150, 174, and 197 each coordinate 1-deoxy-D-xylulose 5-phosphate. Glu150 contacts Mn(2+). Residue Gly203 participates in NADPH binding. The 1-deoxy-D-xylulose 5-phosphate site is built by Ser210, Asn215, Lys216, and Glu219. Glu219 is a binding site for Mn(2+).

It belongs to the DXR family. Mg(2+) serves as cofactor. Mn(2+) is required as a cofactor.

It carries out the reaction 2-C-methyl-D-erythritol 4-phosphate + NADP(+) = 1-deoxy-D-xylulose 5-phosphate + NADPH + H(+). Its pathway is isoprenoid biosynthesis; isopentenyl diphosphate biosynthesis via DXP pathway; isopentenyl diphosphate from 1-deoxy-D-xylulose 5-phosphate: step 1/6. Catalyzes the NADPH-dependent rearrangement and reduction of 1-deoxy-D-xylulose-5-phosphate (DXP) to 2-C-methyl-D-erythritol 4-phosphate (MEP). This is 1-deoxy-D-xylulose 5-phosphate reductoisomerase from Ehrlichia ruminantium (strain Welgevonden).